The sequence spans 381 residues: Stearoyl-[acyl-carrier-protein] 9-desaturase 1, chloroplastic (381 aa).

Residues 1–26 (MQVVGTVRVSGCGAVVAPSRRQCRVS) constitute a chloroplast transit peptide. Fe cation contacts are provided by glutamate 120, glutamate 158, histidine 161, glutamate 211, glutamate 244, and histidine 247.

Belongs to the fatty acid desaturase type 2 family. Homodimer. The cofactor is Fe(2+).

It localises to the plastid. Its subcellular location is the chloroplast. It carries out the reaction octadecanoyl-[ACP] + 2 reduced [2Fe-2S]-[ferredoxin] + O2 + 2 H(+) = (9Z)-octadecenoyl-[ACP] + 2 oxidized [2Fe-2S]-[ferredoxin] + 2 H2O. The protein operates within lipid metabolism; fatty acid metabolism. Functionally, converts stearoyl-ACP to oleoyl-ACP by introduction of a cis double bond between carbons 9 and 10 of the acyl chain. The chain is Stearoyl-[acyl-carrier-protein] 9-desaturase 1, chloroplastic from Oryza sativa subsp. indica (Rice).